A 249-amino-acid polypeptide reads, in one-letter code: Proteasome subunit alpha type-7 (249 aa).

The protein belongs to the peptidase T1A family. In terms of assembly, the 26S proteasome consists of a 20S proteasome core and two 19S regulatory subunits. The 20S proteasome core is composed of 28 subunits that are arranged in four stacked rings, resulting in a barrel-shaped structure. The two end rings are each formed by seven alpha subunits, and the two central rings are each formed by seven beta subunits. The catalytic chamber with the active sites is on the inside of the barrel.

It is found in the cytoplasm. The protein resides in the nucleus. Functionally, the proteasome is a multicatalytic proteinase complex which is characterized by its ability to cleave peptides with Arg, Phe, Tyr, Leu, and Glu adjacent to the leaving group at neutral or slightly basic pH. The proteasome has an ATP-dependent proteolytic activity. The protein is Proteasome subunit alpha type-7 (PAD1) of Cicer arietinum (Chickpea).